We begin with the raw amino-acid sequence, 1035 residues long: Sulfite reductase [NADPH] flavoprotein component (1035 aa).

The FAD-binding FR-type domain maps to 648–879 (VKNFVVKVKE…VKPSVMKLPP (232 aa)). Residues 684–695 (YDIGEALGIHAR) and 814–824 (LKRREYSIASS) each bind FAD.

FAD serves as cofactor. The cofactor is FMN.

The catalysed reaction is hydrogen sulfide + 3 NADP(+) + 3 H2O = sulfite + 3 NADPH + 4 H(+). It participates in sulfur metabolism; hydrogen sulfide biosynthesis; hydrogen sulfide from sulfite (NADPH route): step 1/1. In terms of biological role, this enzyme catalyzes the 6-electron reduction of sulfite to sulfide. This is one of several activities required for the biosynthesis of L-cysteine from sulfate. This chain is Sulfite reductase [NADPH] flavoprotein component (MET10), found in Saccharomyces cerevisiae (strain ATCC 204508 / S288c) (Baker's yeast).